Reading from the N-terminus, the 137-residue chain is Small ribosomal subunit protein uS8 (137 aa).

The protein belongs to the universal ribosomal protein uS8 family. Part of the 30S ribosomal subunit. Contacts proteins S5 and S12.

One of the primary rRNA binding proteins, it binds directly to 16S rRNA central domain where it helps coordinate assembly of the platform of the 30S subunit. The protein is Small ribosomal subunit protein uS8 of Metamycoplasma arthritidis (strain 158L3-1) (Mycoplasma arthritidis).